Here is a 152-residue protein sequence, read N- to C-terminus: UPF0178 protein YaiI (152 aa).

Belongs to the UPF0178 family.

The chain is UPF0178 protein YaiI from Shigella boydii serotype 18 (strain CDC 3083-94 / BS512).